The following is a 256-amino-acid chain: tRNA (guanine-N(1)-)-methyltransferase (256 aa).

Residues Gly119 and 139-144 each bind S-adenosyl-L-methionine; that span reads IGDYVV.

The protein belongs to the RNA methyltransferase TrmD family. In terms of assembly, homodimer.

The protein resides in the cytoplasm. The enzyme catalyses guanosine(37) in tRNA + S-adenosyl-L-methionine = N(1)-methylguanosine(37) in tRNA + S-adenosyl-L-homocysteine + H(+). In terms of biological role, specifically methylates guanosine-37 in various tRNAs. The polypeptide is tRNA (guanine-N(1)-)-methyltransferase (Nitrosospira multiformis (strain ATCC 25196 / NCIMB 11849 / C 71)).